We begin with the raw amino-acid sequence, 462 residues long: MDSSLQHKTTKIFPSQASRDSLSNRVTMISGAKPLAFSIERIMSRTPEPKCLPVPSLLQGSVPKGDQKQALHINSSSIPCMIPFVPVAYDHCPKIGISGAELRKSHLDSSPPFSCNDLLNCALTLKGDFPREALPLQQYKLVRPRVVNHSSFHAMGAAFCYFNRGDSQCHPPASINIHPVASYFLGSPLHQAPKSYLAERNKLVLPSVEKFSSGVTFKDLSQAQFQHYMKEGAHSLSDKITFKTSAKFSSASPSNKPKVFTCEVCGKVFNAHYNLTRHMPVHTGARPFVCKICGKGFRQASTLCRHKIIHTQEKPHKCNQCGKAFNRSSTLNTHTRIHAGYKPFVCEFCGKGFHQKGNYKNHKLTHSGEKQFKCNICNKAFHQIYNLTFHMHTHNDKKPFTCPTCGKGFCRNFDLKKHVRKLHDSNTAAPHAIGGTGQEELLLPNREPSPTIQSPQLQKSGY.

The Engrailed homology 1 repressor signature appears at 34 to 49 (PLAFSIERIMSRTPEP). 6 consecutive C2H2-type zinc fingers follow at residues 260-282 (FTCE…MPVH), 288-310 (FVCK…KIIH), 316-338 (HKCN…TRIH), 344-366 (FVCE…KLTH), 372-394 (FKCN…MHTH), and 400-423 (FTCP…RKLH). The tract at residues 441–462 (LLLPNREPSPTIQSPQLQKSGY) is disordered. The span at 448–462 (PSPTIQSPQLQKSGY) shows a compositional bias: polar residues.

This sequence belongs to the krueppel C2H2-type zinc-finger protein family.

It is found in the nucleus. Its function is as follows. Transcription repressor. Involved in the development of the forebrain region. The polypeptide is Fez family zinc finger protein 1 (fezf1) (Xenopus tropicalis (Western clawed frog)).